A 559-amino-acid polypeptide reads, in one-letter code: MGTVSRAALILACLALASAASEGAFKASDQREMTPERLFQHLHEVGYAAPPSPPQTRRLRVDHSVTSLHDPPLFEEQREVQPPSSPEDIPVYEEDWPTFLNPNVDKAGPAVPQEAIPLQKEQPPPQVHIEQKEIDPPAQPQEEIVQKEVKPHTLAGQLPPEPRTWNPARHCQQGRRGVWGHRLDGFPPGRPSPDNLKQICLPERQHVIYGPWNLPQTGYSHLSRQGETLNVLETGYSRCCRCRSDTNRLDCLKLVWEDAMTQFCEAEFSVKTRPHLCCRLRGEERFSCFQKEAPRPDYLLRPCPVHQNGMSSGPQLPFPPGLPTPDNVKNICLLRRFRAVPRNLPATDAIQRQLQALTRLETEFQRCCRQGHNHTCTWKAWEGTLDGYCERELAIKTHPHSCCHYPPSPARDECFAHLAPYPNYDRDILTLDLSRVTPNLMGQLCGSGRVLSKHKQIPGLIQNMTIRCCELPYPEQACCGEEEKLAFIENLCGPRRNSWKDPALCCDLSPEDKQINCFNTNYLRNVALVAGDTGNATGLGEQGPTRGTDANPAPGSKEE.

Residues 1 to 19 (MGTVSRAALILACLALASA) form the signal peptide. A run of 2 repeats spans residues 170 to 298 (HCQQ…RPDY) and 302 to 424 (PCPV…YPNY). The interval 170–424 (HCQQGRRGVW…FAHLAPYPNY (255 aa)) is 2 X approximate repeats. N-linked (GlcNAc...) asparagine glycosylation is present at asparagine 373. Residues asparagine 463 and asparagine 535 are each glycosylated (N-linked (GlcNAc...) (high mannose) asparagine). The disordered stretch occupies residues 535–559 (NATGLGEQGPTRGTDANPAPGSKEE). The residue at position 556 (serine 556) is a Phosphoserine.

As to quaternary structure, interacts (via C-terminus) with HSPG2 (via C-terminus). Interacts with EFEMP1/FBLN3 and LAMB3. Interacts with MMP9. In terms of tissue distribution, expressed in the surrounding connective tissues of developing long bones, but not in the cartilage. The long isoform is expressed in a number of tissues including liver, heart and lungs. The short isoform is expressed in skin and cartilage-containing tissues such as tail and front paw. No expression is found in brain.

It is found in the secreted. The protein localises to the extracellular space. It localises to the extracellular matrix. Functionally, involved in endochondral bone formation as negative regulator of bone mineralization. Stimulates the proliferation of endothelial cells and promotes angiogenesis. Inhibits MMP9 proteolytic activity. The sequence is that of Extracellular matrix protein 1 (Ecm1) from Mus musculus (Mouse).